Reading from the N-terminus, the 287-residue chain is Endolytic peptidoglycan transglycosylase RlpA (287 aa).

The first 25 residues, 1–25, serve as a signal peptide directing secretion; it reads MKLKTGLNLTALLLFMISVAFPAQA. One can recognise an SPOR domain in the interval 209 to 284; that stretch reads LKGTEFYCLK…ANNKPLIVYT (76 aa).

Belongs to the RlpA family.

Its function is as follows. Lytic transglycosylase with a strong preference for naked glycan strands that lack stem peptides. The chain is Endolytic peptidoglycan transglycosylase RlpA from Haemophilus influenzae (strain ATCC 51907 / DSM 11121 / KW20 / Rd).